A 98-amino-acid chain; its full sequence is Large ribosomal subunit protein uL23 (98 aa).

It belongs to the universal ribosomal protein uL23 family. Part of the 50S ribosomal subunit. Contacts protein L29, and trigger factor when it is bound to the ribosome.

Functionally, one of the early assembly proteins it binds 23S rRNA. One of the proteins that surrounds the polypeptide exit tunnel on the outside of the ribosome. Forms the main docking site for trigger factor binding to the ribosome. The sequence is that of Large ribosomal subunit protein uL23 from Parafrankia sp. (strain EAN1pec).